Reading from the N-terminus, the 221-residue chain is Immediate early response gene 2 protein (221 aa).

At M1 the chain carries N-acetylmethionine. Residues E105–P155 form a disordered region. Positions S125–V136 are enriched in low complexity.

This sequence belongs to the IER family.

It localises to the cytoplasm. Its subcellular location is the nucleus. Functionally, DNA-binding protein that seems to act as a transcription factor. Involved in the regulation of neuronal differentiation, acts upon JNK-signaling pathway activation and plays a role in neurite outgrowth in hippocampal cells. May mediate with FIBP FGF-signaling in the establishment of laterality in the embryo. Promotes cell motility, seems to stimulate tumor metastasis. This chain is Immediate early response gene 2 protein (Ier2), found in Mus musculus (Mouse).